A 270-amino-acid chain; its full sequence is Bacterial microcompartment shell protein PduB (270 aa).

The segment at L6 to V18 is probable helix that binds cargo to the BMC shell. BMC circularly permuted domains follow at residues E47 to F152 and D154 to L258.

The protein belongs to the EutL/PduB family. In terms of assembly, homotrimerizes to form a pseudohexamer with a central pore. The trimers pack into an array. In purified BMCs seen as a 28.0 kDa and 25.0 kDa form, both of which have been N-terminally sequenced and whose N-fMet is removed; the smaller form is called PduB'.

The protein localises to the bacterial microcompartment. The protein operates within polyol metabolism; 1,2-propanediol degradation. Functionally, the two proteins produced are among the major shell proteins of the bacterial microcompartment (BMC) dedicated to 1,2-propanediol (1,2-PD) degradation. Required for structural integrity of BMCs and to mitigate propionaldehyde toxicity. The N-terminal 13 residues are important for correct assembly of the BMC shell. The isolated BMC shell component protein ratio for J:A:B':B:K:T:U is approximately 15:10:7:6:1:1:2. The N-terminus of the long form (PduB) is required for correct formation of BMCs, deletions in the first 37 residues have substantially reduced levels of the major lumen enzymes. May play a major role in binding the enzyme contents to the shell. In terms of biological role, the 1,2-PD-specific bacterial microcompartment (BMC) concentrates low levels of 1,2-PD catabolic enzymes, concentrates volatile reaction intermediates thus enhancing pathway flux and keeps the level of toxic, mutagenic propionaldehyde low. In Salmonella typhimurium (strain LT2 / SGSC1412 / ATCC 700720), this protein is Bacterial microcompartment shell protein PduB.